The chain runs to 409 residues: uncharacterized protein (409 aa).

The region spanning 3 to 162 (TDVRVLRQDD…DDVRLRYAVP (160 aa)) is the N-acetyltransferase domain. Residues 82–84 (VSV), 90–95 (RRGVLT), and 118–119 (SE) contribute to the acetyl-CoA site. Residue Tyr123 is the Proton donor of the active site. Residue Phe409 is the Proton acceptor; via carboxylate of the active site.

Belongs to the acetyltransferase Eis family. Homohexamer; trimer of dimers.

This is an uncharacterized protein from Streptomyces avermitilis (strain ATCC 31267 / DSM 46492 / JCM 5070 / NBRC 14893 / NCIMB 12804 / NRRL 8165 / MA-4680).